The following is a 362-amino-acid chain: 3-dehydroquinate synthase (362 aa).

Residues 70–75, 104–108, 128–129, lysine 141, and lysine 150 each bind NAD(+); these read DGEKYK, GVIGD, and TT. Glutamate 183, histidine 246, and histidine 263 together coordinate Zn(2+).

It belongs to the sugar phosphate cyclases superfamily. Dehydroquinate synthase family. Requires Co(2+) as cofactor. Zn(2+) is required as a cofactor. NAD(+) serves as cofactor.

It is found in the cytoplasm. The enzyme catalyses 7-phospho-2-dehydro-3-deoxy-D-arabino-heptonate = 3-dehydroquinate + phosphate. It functions in the pathway metabolic intermediate biosynthesis; chorismate biosynthesis; chorismate from D-erythrose 4-phosphate and phosphoenolpyruvate: step 2/7. Functionally, catalyzes the conversion of 3-deoxy-D-arabino-heptulosonate 7-phosphate (DAHP) to dehydroquinate (DHQ). The polypeptide is 3-dehydroquinate synthase (Acinetobacter baylyi (strain ATCC 33305 / BD413 / ADP1)).